The following is a 300-amino-acid chain: Geranylgeranyl pyrophosphate synthase (300 aa).

Methionine 1 bears the N-acetylmethionine mark. Residues lysine 25, arginine 28, and histidine 57 each coordinate isopentenyl diphosphate. Mg(2+) contacts are provided by aspartate 64 and aspartate 68. Arginine 73 provides a ligand contact to dimethylallyl diphosphate. Arginine 74 serves as a coordination point for isopentenyl diphosphate. Dimethylallyl diphosphate is bound by residues lysine 151, threonine 152, glutamine 185, lysine 202, and lysine 212.

This sequence belongs to the FPP/GGPP synthase family. As to quaternary structure, homohexamer; trimer of homodimers. It depends on Mg(2+) as a cofactor.

It localises to the cytoplasm. It is found in the perinuclear region. The protein localises to the myofibril. Its subcellular location is the sarcomere. The protein resides in the z line. The enzyme catalyses isopentenyl diphosphate + dimethylallyl diphosphate = (2E)-geranyl diphosphate + diphosphate. The catalysed reaction is isopentenyl diphosphate + (2E)-geranyl diphosphate = (2E,6E)-farnesyl diphosphate + diphosphate. It carries out the reaction isopentenyl diphosphate + (2E,6E)-farnesyl diphosphate = (2E,6E,10E)-geranylgeranyl diphosphate + diphosphate. It participates in isoprenoid biosynthesis; farnesyl diphosphate biosynthesis; farnesyl diphosphate from geranyl diphosphate and isopentenyl diphosphate: step 1/1. The protein operates within isoprenoid biosynthesis; geranyl diphosphate biosynthesis; geranyl diphosphate from dimethylallyl diphosphate and isopentenyl diphosphate: step 1/1. Its pathway is isoprenoid biosynthesis; geranylgeranyl diphosphate biosynthesis; geranylgeranyl diphosphate from farnesyl diphosphate and isopentenyl diphosphate: step 1/1. In terms of biological role, catalyzes the trans-addition of the three molecules of IPP onto DMAPP to form geranylgeranyl pyrophosphate, an important precursor of carotenoids and geranylated proteins. The sequence is that of Geranylgeranyl pyrophosphate synthase (GGPS1) from Bos taurus (Bovine).